The sequence spans 616 residues: Chaperone protein HscA (616 aa).

The protein belongs to the heat shock protein 70 family.

Chaperone involved in the maturation of iron-sulfur cluster-containing proteins. Has a low intrinsic ATPase activity which is markedly stimulated by HscB. Involved in the maturation of IscU. This is Chaperone protein HscA from Shigella boydii serotype 18 (strain CDC 3083-94 / BS512).